The chain runs to 267 residues: 2-keto-3-deoxy-L-rhamnonate aldolase (267 aa).

The Proton acceptor role is filled by His-49. Gln-151 is a substrate binding site. Glu-153 contributes to the Mg(2+) binding site. 2 residues coordinate substrate: Ala-178 and Asp-179. Asp-179 lines the Mg(2+) pocket.

This sequence belongs to the HpcH/HpaI aldolase family. KDR aldolase subfamily. In terms of assembly, homohexamer. It depends on Mg(2+) as a cofactor.

It carries out the reaction 2-dehydro-3-deoxy-L-rhamnonate = (S)-lactaldehyde + pyruvate. Functionally, catalyzes the reversible retro-aldol cleavage of 2-keto-3-deoxy-L-rhamnonate (KDR) to pyruvate and lactaldehyde. The protein is 2-keto-3-deoxy-L-rhamnonate aldolase of Escherichia coli O157:H7.